We begin with the raw amino-acid sequence, 530 residues long: Glutamate--cysteine ligase (530 aa).

This sequence belongs to the glutamate--cysteine ligase type 1 family. Type 1 subfamily.

The enzyme catalyses L-cysteine + L-glutamate + ATP = gamma-L-glutamyl-L-cysteine + ADP + phosphate + H(+). It functions in the pathway sulfur metabolism; glutathione biosynthesis; glutathione from L-cysteine and L-glutamate: step 1/2. The chain is Glutamate--cysteine ligase from Azotobacter vinelandii (strain DJ / ATCC BAA-1303).